A 264-amino-acid polypeptide reads, in one-letter code: Glutamate racemase (264 aa).

Substrate contacts are provided by residues 10-11 (DS) and 42-43 (YG). Cysteine 73 (proton donor/acceptor) is an active-site residue. Residue 74–75 (NT) coordinates substrate. Cysteine 183 serves as the catalytic Proton donor/acceptor. 184–185 (TH) provides a ligand contact to substrate.

This sequence belongs to the aspartate/glutamate racemases family.

The enzyme catalyses L-glutamate = D-glutamate. The protein operates within cell wall biogenesis; peptidoglycan biosynthesis. Provides the (R)-glutamate required for cell wall biosynthesis. In Streptococcus gordonii (strain Challis / ATCC 35105 / BCRC 15272 / CH1 / DL1 / V288), this protein is Glutamate racemase.